The sequence spans 623 residues: Chaperone protein HtpG (623 aa).

The a; substrate-binding stretch occupies residues 1 to 336 (MSETNTQKAA…TEDLPLNVSR (336 aa)). The tract at residues 337 to 546 (EMLQATPVLA…DGGPDLTMQR (210 aa)) is b. The tract at residues 547–623 (LMRRSGQAMP…ATLLAGPAAE (77 aa)) is c.

This sequence belongs to the heat shock protein 90 family. In terms of assembly, homodimer.

It is found in the cytoplasm. Molecular chaperone. Has ATPase activity. The chain is Chaperone protein HtpG from Gluconobacter oxydans (strain 621H) (Gluconobacter suboxydans).